The sequence spans 74 residues: Bacteriocin hiracin-JM79 (74 aa).

Positions 1 to 30 (MKKKVLKHCVILGILGTCLAGIGTGIKVDA) are cleaved as a signal peptide.

It is found in the secreted. Functionally, bacteriocin with antibacterial activity against the Gram-positive Listeria, Enterococcus, Propionibacterium, Staphylococcus and some strains of Clostridium, Lactobacillus and Pediococcus. Lacks antibacterial activity against Gram-negative bacteria. The polypeptide is Bacteriocin hiracin-JM79 (Enterococcus hirae).